The sequence spans 144 residues: Ribonuclease VapC37 (144 aa).

The PINc domain occupies 3–137; it reads IVDANVLLYA…DFGRFEGVRW (135 aa). The Mg(2+) site is built by D5 and D90.

Belongs to the PINc/VapC protein family. Requires Mg(2+) as cofactor.

It is found in the secreted. In terms of biological role, probable toxic component of a type II toxin-antitoxin (TA) system. An RNase. Upon expression in M.smegmatis inhibits colony formation. The putative cognate antitoxin is VapB37. This is Ribonuclease VapC37 from Mycobacterium tuberculosis (strain ATCC 25618 / H37Rv).